We begin with the raw amino-acid sequence, 315 residues long: Protein rlx (315 aa).

The tract at residues 263-315 is disordered; that stretch reads TEQLKQRRVERAQETKQAHSKISSRDTRESENQRERAKGNNIRIERGDEGLSR.

Functionally, this protein is probably required for relaxation complex formation and plasmid mobilization by conjugative plasmids. The sequence is that of Protein rlx (rlx) from Staphylococcus aureus.